A 98-amino-acid chain; its full sequence is NADH-ubiquinone oxidoreductase chain 4L (98 aa).

Transmembrane regions (helical) follow at residues 1-21 (MSLI…GLLM), 29-49 (ALLC…LTIL), and 61-81 (IILL…LVMI).

Belongs to the complex I subunit 4L family. As to quaternary structure, core subunit of respiratory chain NADH dehydrogenase (Complex I) which is composed of 45 different subunits.

The protein localises to the mitochondrion inner membrane. It carries out the reaction a ubiquinone + NADH + 5 H(+)(in) = a ubiquinol + NAD(+) + 4 H(+)(out). Core subunit of the mitochondrial membrane respiratory chain NADH dehydrogenase (Complex I) which catalyzes electron transfer from NADH through the respiratory chain, using ubiquinone as an electron acceptor. Part of the enzyme membrane arm which is embedded in the lipid bilayer and involved in proton translocation. In Platanista minor (Indus river dolphin), this protein is NADH-ubiquinone oxidoreductase chain 4L (MT-ND4L).